The sequence spans 1615 residues: DNA-directed RNA polymerase I subunit rpa1 (1615 aa).

Residues Cys-65, Cys-68, Cys-75, and His-78 each coordinate Zn(2+). The segment at 155 to 181 (GKSNEEGEEVMESDESDSDKMDTDENK) is disordered. Positions 160-171 (EGEEVMESDESD) are enriched in acidic residues. The span at 172 to 181 (SDKMDTDENK) shows a compositional bias: basic and acidic residues. Mg(2+)-binding residues include Asp-593, Asp-595, and Asp-597. The interval 955–967 (PQDYFFHCMAGRE) is bridging helix. Residues 1305 to 1316 (DSLTINDDDAPA) are compositionally biased toward acidic residues. Positions 1305–1411 (DSLTINDDDA…NSRSSNSFSD (107 aa)) are disordered. The span at 1317-1336 (NDDTTNNDENTSQQQPSSQN) shows a compositional bias: low complexity. Over residues 1366–1399 (EDGEEEAEEKDSDEGESEAEESDDKSDVDSDSDE) the composition is skewed to acidic residues. Residues 1400 to 1411 (ISNSRSSNSFSD) are compositionally biased toward low complexity.

Belongs to the RNA polymerase beta' chain family. Component of the RNA polymerase I (Pol I) complex consisting of at least 13 subunits.

It localises to the nucleus. The catalysed reaction is RNA(n) + a ribonucleoside 5'-triphosphate = RNA(n+1) + diphosphate. Functionally, DNA-dependent RNA polymerase catalyzes the transcription of DNA into RNA using the four ribonucleoside triphosphates as substrates. Largest and catalytic core component of RNA polymerase I which synthesizes ribosomal RNA precursors. Forms the polymerase active center together with the second largest subunit. A single stranded DNA template strand of the promoter is positioned within the central active site cleft of Pol I. A bridging helix emanates from RPA1 and crosses the cleft near the catalytic site and is thought to promote translocation of Pol I by acting as a ratchet that moves the RNA-DNA hybrid through the active site by switching from straight to bent conformations at each step of nucleotide addition. This Dictyostelium discoideum (Social amoeba) protein is DNA-directed RNA polymerase I subunit rpa1 (polr1a).